The primary structure comprises 292 residues: MRQIAFYGKGGIGKSTTCQNTVAGMAELGQRIMIVGCDPKADSTRLMLHCKAQTTVLHLAAERGSVEDVELEEVVLTGYRGVRCVESGGPEPGVGCAGRGIITAINFLEENGAYEDLDFVCYDVLGDVVCGGFAMPIREGKAQEIYIVCSGEMMAMYAANNIARGVLKYAYSGGVRLGGLICNSRKVDREIELIEALAEKLNTKMLHFIPRDNVVQHAELRRMTVIEYSPDCNQADEYRALAKKIINNTDLRIPTPISMDELEQLLIEFGVLDDDQKIAHLIGKTEKELAPV.

8-15 provides a ligand contact to ATP; sequence GKGGIGKS. A [4Fe-4S] cluster-binding site is contributed by C96. ADP-ribosylarginine; by dinitrogenase reductase ADP-ribosyltransferase is present on R99. Residue C130 participates in [4Fe-4S] cluster binding.

Belongs to the NifH/BchL/ChlL family. In terms of assembly, homodimer. The cofactor is [4Fe-4S] cluster. The reversible ADP-ribosylation of Arg-99 inactivates the nitrogenase reductase and regulates nitrogenase activity.

It carries out the reaction N2 + 8 reduced [2Fe-2S]-[ferredoxin] + 16 ATP + 16 H2O = H2 + 8 oxidized [2Fe-2S]-[ferredoxin] + 2 NH4(+) + 16 ADP + 16 phosphate + 6 H(+). Functionally, the key enzymatic reactions in nitrogen fixation are catalyzed by the nitrogenase complex, which has 2 components: the iron protein and the molybdenum-iron protein. This Synechococcus sp. (strain JA-3-3Ab) (Cyanobacteria bacterium Yellowstone A-Prime) protein is Nitrogenase iron protein.